The chain runs to 1024 residues: P3N-PIPO polyprotein (1024 aa).

One can recognise a Peptidase S30 domain in the interval Arg165–Tyr308. Residues His216, Asp225, and Ser259 each act as for P1 proteinase activity in the active site. The short motif at Lys360–Cys363 is the Involved in interaction with stylet and aphid transmission element. The Involved in virions binding and aphid transmission signature appears at Pro619–Lys621. Residues Met645 to Gly767 form the Peptidase C6 domain. Residues Cys653 and His726 each act as for helper component proteinase activity in the active site.

This sequence belongs to the potyviridae P3N-PIPO polyprotein family. In terms of assembly, interacts (via PIPO domain) with host PCaP1 protein; this interaction may help to anchor the movement complex to the plasma membrane from which the complex could move to the plasmodesmata. Post-translationally, potyviral RNA is expressed as two polyproteins which undergo post-translational proteolytic processing. Genome polyprotein is processed by NIa-pro, P1 and HC-pro proteinases resulting in the production of at least ten individual proteins. P3N-PIPO is cleaved by P1 and HC-pro proteinases resulting in the production of three individual proteins. The P1 proteinase and the HC-pro cleave only their respective C-termini autocatalytically.

It is found in the host cell junction. The protein localises to the host plasmodesma. It catalyses the reaction Hydrolyzes a Gly-|-Gly bond at its own C-terminus, commonly in the sequence -Tyr-Xaa-Val-Gly-|-Gly, in the processing of the potyviral polyprotein.. Required for aphid transmission and also has proteolytic activity. Only cleaves a Gly-Gly dipeptide at its own C-terminus. Interacts with virions and aphid stylets. Acts as a suppressor of RNA-mediated gene silencing, also known as post-transcriptional gene silencing (PTGS), a mechanism of plant viral defense that limits the accumulation of viral RNAs. May have RNA-binding activity. Its function is as follows. Allows efficient cell to cell propagation, by bypassing the host cell wall barrier. Transports viral genome to neighboring plant cells directly through plasmosdesmata, without any budding. This Plum pox potyvirus (strain D) (PPV) protein is P3N-PIPO polyprotein.